Here is a 302-residue protein sequence, read N- to C-terminus: Glutaminase (302 aa).

Substrate contacts are provided by Ser61, Asn111, Glu155, Asn162, Tyr186, Tyr238, and Val256.

Belongs to the glutaminase family. In terms of assembly, homotetramer.

It carries out the reaction L-glutamine + H2O = L-glutamate + NH4(+). This is Glutaminase from Pseudomonas syringae pv. tomato (strain ATCC BAA-871 / DC3000).